A 397-amino-acid chain; its full sequence is Myb family transcription factor PHL4 (397 aa).

Residues 1 to 27 (MIPNDDDDANSMKNYPLNDDDANSMKN) form a disordered region. The HTH myb-type domain occupies 228–288 (AAAKGRMRWT…HLQKYRTAKY (61 aa)). A DNA-binding region (H-T-H motif) is located at residues 259 to 284 (PKGVLKHMKVEGLTIFHVKSHLQKYR). Positions 319-339 (TETLRIQMEHQKKLHEQLESL) are coiled coil. An LHEQLE motif is present at residues 332 to 337 (LHEQLE). Residues 359-397 (KQNMGFGGPEQGEKTSAKTPENGSEESESPRPKRPRNEE) are disordered. A compositionally biased stretch (basic and acidic residues) spans 386–397 (ESPRPKRPRNEE). Ser-387 is modified (phosphoserine).

This sequence belongs to the MYB-CC family.

The protein resides in the nucleus. Functionally, transcription factor involved in male gametophyte development. The polypeptide is Myb family transcription factor PHL4 (Arabidopsis thaliana (Mouse-ear cress)).